The sequence spans 201 residues: MARYIGPKTKIARKFGEPIFGPDKSLIKSERAAGNNKHAPRKKKMSVFGTQLAEKQKAKYTYGLLEKQFSNLFTKAHSLPGVTGEVLMQLLECRLDNIVYRMGLARTRAAARQLVTHRHITVDGEIVKTPSYSVKPGQVISVTEGSKSLSMFEVNLKGYDHAKYSWIEWKEPVSAKYVRIPERAEIPENINEQLIVEHYSK.

Positions 93–155 (CRLDNIVYRM…SKSLSMFEVN (63 aa)) constitute an S4 RNA-binding domain.

The protein belongs to the universal ribosomal protein uS4 family. As to quaternary structure, part of the 30S ribosomal subunit. Contacts protein S5. The interaction surface between S4 and S5 is involved in control of translational fidelity.

Its function is as follows. One of the primary rRNA binding proteins, it binds directly to 16S rRNA where it nucleates assembly of the body of the 30S subunit. With S5 and S12 plays an important role in translational accuracy. In Elusimicrobium minutum (strain Pei191), this protein is Small ribosomal subunit protein uS4.